A 327-amino-acid polypeptide reads, in one-letter code: MADTLDLGSSAFGCKGSSPFLRTTMIGQPCVDFFFFFFFFFKKKKKKMITFLYKPKKISSAKFLRQWSKTNLIKKAGHAGTLDPLASGLLLVATEDDTKLLQYLDQKTKTYLAKIQFGFWSTTYDAEGQIYGVEQPIKVTKDNLEQALNRLSESQKQVPPVFSSKKVSGKSAYHYARQGKQIELKPISIKISKTILINFDEKLQNCVIMWQVSRGCYIRSLADDLGKMLKTRAYLSDLERTKIGNFDKKFLNQSLKPQDLFDLQQVKLDLENLELLLQGKKINYFAKNSELNTLIFKDEVVGFGKIINNVLITKKLFGNRIKKIINT.

Asp-83 acts as the Nucleophile in catalysis.

Belongs to the pseudouridine synthase TruB family. Type 1 subfamily.

The catalysed reaction is uridine(55) in tRNA = pseudouridine(55) in tRNA. Functionally, responsible for synthesis of pseudouridine from uracil-55 in the psi GC loop of transfer RNAs. In Mesomycoplasma hyopneumoniae (strain 232) (Mycoplasma hyopneumoniae), this protein is tRNA pseudouridine synthase B.